Reading from the N-terminus, the 176-residue chain is Large ribosomal subunit protein uL10 (176 aa).

This sequence belongs to the universal ribosomal protein uL10 family. In terms of assembly, part of the ribosomal stalk of the 50S ribosomal subunit. The N-terminus interacts with L11 and the large rRNA to form the base of the stalk. The C-terminus forms an elongated spine to which L12 dimers bind in a sequential fashion forming a multimeric L10(L12)X complex.

Functionally, forms part of the ribosomal stalk, playing a central role in the interaction of the ribosome with GTP-bound translation factors. This chain is Large ribosomal subunit protein uL10, found in Natranaerobius thermophilus (strain ATCC BAA-1301 / DSM 18059 / JW/NM-WN-LF).